Consider the following 508-residue polypeptide: Protein phosphatase PP2A regulatory subunit B (508 aa).

WD repeat units lie at residues 19 to 58, 81 to 122, 166 to 204, 215 to 255, 274 to 312, and 329 to 370; these read TEAD…KKQS, EIEE…IKLV, AHAY…QSFN, ELTE…LCDS, EITS…KPIK, and ENDA…GNDD. The interval 369–466 is disordered; the sequence is DDKPKFKSAF…MRRRMTSGVG (98 aa). Residues 396 to 418 show a composition bias toward acidic residues; that stretch reads DDDDDDDDDDDDEEADDEFDEEV. The segment covering 447–461 has biased composition (basic residues); sequence FKSKKSGQHPMRRRM. A WD 7 repeat occupies 477 to 507; sequence DFKKSILHLSWHPRENSVAIAATNNLYIFST.

It belongs to the phosphatase 2A regulatory subunit B family. In terms of assembly, PP2A exists in several trimeric forms, all of which consist of a core composed of a catalytic subunit associated with a 65 kDa (PR65) (Subunit A) and a 55 kDa (PR55) (Subunit B) regulatory subunit.

Functionally, phosphatase 2A affects a variety of biological processes in the cell such as transcription, cell cycle progression and cellular morphogenesis, and provides an initial identification of critical substrates for this phosphatase. The regulatory subunit may direct the catalytic subunit to distinct, albeit overlapping, subsets of substrates. The sequence is that of Protein phosphatase PP2A regulatory subunit B (CDC55) from Candida tropicalis (Yeast).